A 219-amino-acid polypeptide reads, in one-letter code: Ribose-5-phosphate isomerase A (219 aa).

Substrate-binding positions include 28–31 (SGST), 81–84 (DGAD), and 94–97 (KGGG). The active-site Proton acceptor is E103. K121 is a binding site for substrate.

Belongs to the ribose 5-phosphate isomerase family. In terms of assembly, homodimer.

The enzyme catalyses aldehydo-D-ribose 5-phosphate = D-ribulose 5-phosphate. The protein operates within carbohydrate degradation; pentose phosphate pathway; D-ribose 5-phosphate from D-ribulose 5-phosphate (non-oxidative stage): step 1/1. In terms of biological role, catalyzes the reversible conversion of ribose-5-phosphate to ribulose 5-phosphate. The chain is Ribose-5-phosphate isomerase A from Histophilus somni (strain 2336) (Haemophilus somnus).